The primary structure comprises 422 residues: Enolase 2 (422 aa).

Q162 serves as a coordination point for (2R)-2-phosphoglycerate. E204 serves as the catalytic Proton donor. Residues D241, E285, and D312 each contribute to the Mg(2+) site. (2R)-2-phosphoglycerate contacts are provided by K337, R366, S367, and K388. K337 acts as the Proton acceptor in catalysis.

It belongs to the enolase family. The cofactor is Mg(2+).

The protein localises to the cytoplasm. It is found in the secreted. The protein resides in the cell surface. The catalysed reaction is (2R)-2-phosphoglycerate = phosphoenolpyruvate + H2O. It functions in the pathway carbohydrate degradation; glycolysis; pyruvate from D-glyceraldehyde 3-phosphate: step 4/5. Functionally, catalyzes the reversible conversion of 2-phosphoglycerate (2-PG) into phosphoenolpyruvate (PEP). It is essential for the degradation of carbohydrates via glycolysis. In Lactococcus lactis subsp. lactis (strain IL1403) (Streptococcus lactis), this protein is Enolase 2.